Consider the following 426-residue polypeptide: Tol-Pal system protein TolB (426 aa).

The signal sequence occupies residues 1–24 (MKLKSRFTSIIGVITLFFSQTVTA).

It belongs to the TolB family. In terms of assembly, the Tol-Pal system is composed of five core proteins: the inner membrane proteins TolA, TolQ and TolR, the periplasmic protein TolB and the outer membrane protein Pal. They form a network linking the inner and outer membranes and the peptidoglycan layer.

It localises to the periplasm. In terms of biological role, part of the Tol-Pal system, which plays a role in outer membrane invagination during cell division and is important for maintaining outer membrane integrity. In Actinobacillus pleuropneumoniae serotype 5b (strain L20), this protein is Tol-Pal system protein TolB.